Reading from the N-terminus, the 345-residue chain is Major capsid protein (345 aa).

Intercapsomeric interactions stretches follow at residues 11-25 and 152-156; these read GTNQGKGVVAAGDKL and YNENI.

The protein belongs to the T7virus major capsid protein family. In terms of assembly, homohexamer. Interacts with the connector protein and the minor capsid protein. Interacts with the capsid assembly scaffolding protein; capsid proteins and scaffolding proteins form building blocks that assemble to form the procapsid, each hexamer of the major capsid protein interacting with 2 scaffolding proteins.

It localises to the virion. In terms of biological role, assembles with the minor capsid protein to form an icosahedral capsid with a T=7 symmetry, about 60 nm in diameter, and consisting of 415 capsid proteins. The major and minor capsid proteins are incorporated into the capsid in about a 90/10 ratio respectively. Once the capsid is formed, encapsidates one single copy of the viral genome. The chain is Major capsid protein from Escherichia coli (Bacteriophage T7).